A 496-amino-acid chain; its full sequence is Acetyl-coenzyme A carboxylase carboxyl transferase subunit beta, chloroplastic (496 aa).

Residues 229–496 (LWVQCENCYG…FFPLNKNFIK (268 aa)) enclose the CoA carboxyltransferase N-terminal domain. Zn(2+)-binding residues include Cys233, Cys236, Cys252, and Cys255. Residues 233–255 (CENCYGLNYKKFFRLKLHICEQC) form a C4-type zinc finger.

The protein belongs to the AccD/PCCB family. In terms of assembly, acetyl-CoA carboxylase is a heterohexamer composed of biotin carboxyl carrier protein, biotin carboxylase and 2 subunits each of ACCase subunit alpha and ACCase plastid-coded subunit beta (accD). It depends on Zn(2+) as a cofactor.

The protein resides in the plastid. It is found in the chloroplast stroma. The catalysed reaction is N(6)-carboxybiotinyl-L-lysyl-[protein] + acetyl-CoA = N(6)-biotinyl-L-lysyl-[protein] + malonyl-CoA. Its pathway is lipid metabolism; malonyl-CoA biosynthesis; malonyl-CoA from acetyl-CoA: step 1/1. Its function is as follows. Component of the acetyl coenzyme A carboxylase (ACC) complex. Biotin carboxylase (BC) catalyzes the carboxylation of biotin on its carrier protein (BCCP) and then the CO(2) group is transferred by the transcarboxylase to acetyl-CoA to form malonyl-CoA. The protein is Acetyl-coenzyme A carboxylase carboxyl transferase subunit beta, chloroplastic of Ranunculus macranthus (Large buttercup).